Here is a 118-residue protein sequence, read N- to C-terminus: Ribosome-binding factor A (118 aa).

This sequence belongs to the RbfA family. In terms of assembly, monomer. Binds 30S ribosomal subunits, but not 50S ribosomal subunits or 70S ribosomes.

Its subcellular location is the cytoplasm. Functionally, one of several proteins that assist in the late maturation steps of the functional core of the 30S ribosomal subunit. Associates with free 30S ribosomal subunits (but not with 30S subunits that are part of 70S ribosomes or polysomes). Required for efficient processing of 16S rRNA. May interact with the 5'-terminal helix region of 16S rRNA. The polypeptide is Ribosome-binding factor A (Geobacter sulfurreducens (strain ATCC 51573 / DSM 12127 / PCA)).